The sequence spans 327 residues: L-lactate dehydrogenase (327 aa).

Residues Val-18, Asp-39, Lys-44, Tyr-69, and 83–84 each bind NAD(+); that span reads GA. Substrate contacts are provided by residues Gln-86, Arg-92, and 124 to 127; that span reads NPVD. NAD(+)-binding positions include 122 to 124 and Ser-147; that span reads AAN. Residue 152–155 coordinates substrate; that stretch reads DSAR. Residues Arg-157 and His-172 each coordinate beta-D-fructose 1,6-bisphosphate. Residue His-179 is the Proton acceptor of the active site. Tyr-224 is subject to Phosphotyrosine. Thr-233 contacts substrate.

This sequence belongs to the LDH/MDH superfamily. LDH family. Homotetramer.

Its subcellular location is the cytoplasm. It carries out the reaction (S)-lactate + NAD(+) = pyruvate + NADH + H(+). It participates in fermentation; pyruvate fermentation to lactate; (S)-lactate from pyruvate: step 1/1. Allosterically activated by fructose 1,6-bisphosphate (FBP). Catalyzes the conversion of lactate to pyruvate. In Streptococcus uberis (strain ATCC BAA-854 / 0140J), this protein is L-lactate dehydrogenase.